Reading from the N-terminus, the 620-residue chain is Chaperone protein DnaK (620 aa).

Position 197 is a phosphothreonine; by autocatalysis (Thr-197). A disordered region spans residues Ala-597–Glu-620.

It belongs to the heat shock protein 70 family.

Functionally, acts as a chaperone. This chain is Chaperone protein DnaK, found in Helicobacter pylori (strain Shi470).